The sequence spans 205 residues: Coenzyme Q-binding protein COQ10, mitochondrial (205 aa).

It belongs to the COQ10 family. Interacts with coenzyme Q.

The protein resides in the mitochondrion inner membrane. Required for the function of coenzyme Q in the respiratory chain. May serve as a chaperone or may be involved in the transport of Q6 from its site of synthesis to the catalytic sites of the respiratory complexes. The protein is Coenzyme Q-binding protein COQ10, mitochondrial (coq10-1) of Dictyostelium discoideum (Social amoeba).